A 190-amino-acid polypeptide reads, in one-letter code: Large ribosomal subunit protein bL25 (190 aa).

A disordered region spans residues 1 to 20 (MSEQKTLSVQKRDNLGKGAN).

Belongs to the bacterial ribosomal protein bL25 family. CTC subfamily. As to quaternary structure, part of the 50S ribosomal subunit; part of the 5S rRNA/L5/L18/L25 subcomplex. Contacts the 5S rRNA. Binds to the 5S rRNA independently of L5 and L18.

In terms of biological role, this is one of the proteins that binds to the 5S RNA in the ribosome where it forms part of the central protuberance. The protein is Large ribosomal subunit protein bL25 of Nitratidesulfovibrio vulgaris (strain ATCC 29579 / DSM 644 / CCUG 34227 / NCIMB 8303 / VKM B-1760 / Hildenborough) (Desulfovibrio vulgaris).